Reading from the N-terminus, the 255-residue chain is NAD kinase (255 aa).

D44 (proton acceptor) is an active-site residue. Residues 44 to 45 (DG), H49, 114 to 115 (NE), D144, A152, 155 to 160 (SAYNLS), and Q216 contribute to the NAD(+) site.

It belongs to the NAD kinase family. A divalent metal cation is required as a cofactor.

It localises to the cytoplasm. It carries out the reaction NAD(+) + ATP = ADP + NADP(+) + H(+). Functionally, involved in the regulation of the intracellular balance of NAD and NADP, and is a key enzyme in the biosynthesis of NADP. Catalyzes specifically the phosphorylation on 2'-hydroxyl of the adenosine moiety of NAD to yield NADP. In Rickettsia akari (strain Hartford), this protein is NAD kinase.